A 141-amino-acid polypeptide reads, in one-letter code: VLSDEDKTNVKTFWGKIGTHTGEYGGEALERMFLSFPTTKTYFPHFDLSHGSGQIKAHGKKVADALTRAVGHLEDLPGTLSELSDLHAHRLRVDPVNFKLLSHCLLVTLSSHLREDFTPSVHASLDKFLSSVSTVLTSKYR.

Residues 1–141 enclose the Globin domain; that stretch reads VLSDEDKTNV…VSTVLTSKYR (141 aa). Residue serine 3 is modified to Phosphoserine. The residue at position 7 (lysine 7) is an N6-succinyllysine. Position 8 is a phosphothreonine (threonine 8). Lysine 11 is modified (N6-succinyllysine). Lysine 16 carries the N6-acetyllysine; alternate modification. N6-succinyllysine; alternate is present on lysine 16. Position 24 is a phosphotyrosine (tyrosine 24). Residue serine 35 is modified to Phosphoserine. The residue at position 40 (lysine 40) is an N6-succinyllysine. Serine 49 is modified (phosphoserine). Residue histidine 58 participates in O2 binding. Position 87 (histidine 87) interacts with heme b. Phosphoserine is present on serine 102. Position 108 is a phosphothreonine (threonine 108). 2 positions are modified to phosphoserine: serine 124 and serine 131. Phosphothreonine occurs at positions 134 and 137. A Phosphoserine modification is found at serine 138.

The protein belongs to the globin family. Heterotetramer of two alpha chains and two beta chains. As to expression, red blood cells.

Involved in oxygen transport from the lung to the various peripheral tissues. In terms of biological role, hemopressin acts as an antagonist peptide of the cannabinoid receptor CNR1. Hemopressin-binding efficiently blocks cannabinoid receptor CNR1 and subsequent signaling. The protein is Hemoglobin subunit alpha (HBA) of Trichechus inunguis (Amazon manatee).